Consider the following 67-residue polypeptide: DNA-directed RNA polymerase subunit omega (67 aa).

Belongs to the RNA polymerase subunit omega family. In terms of assembly, the RNAP catalytic core consists of 2 alpha, 1 beta, 1 beta' and 1 omega subunit. When a sigma factor is associated with the core the holoenzyme is formed, which can initiate transcription.

The catalysed reaction is RNA(n) + a ribonucleoside 5'-triphosphate = RNA(n+1) + diphosphate. In terms of biological role, promotes RNA polymerase assembly. Latches the N- and C-terminal regions of the beta' subunit thereby facilitating its interaction with the beta and alpha subunits. In Listeria monocytogenes serotype 4a (strain HCC23), this protein is DNA-directed RNA polymerase subunit omega.